A 148-amino-acid chain; its full sequence is Glutamyl-tRNA(Gln) amidotransferase subunit C, mitochondrial (148 aa).

Belongs to the GatC family. In terms of assembly, subunit of the heterotrimeric GatCAB amidotransferase (AdT) complex, composed of A, B and C subunits.

It is found in the mitochondrion. It catalyses the reaction L-glutamyl-tRNA(Gln) + L-glutamine + ATP + H2O = L-glutaminyl-tRNA(Gln) + L-glutamate + ADP + phosphate + H(+). Functionally, allows the formation of correctly charged Gln-tRNA(Gln) through the transamidation of misacylated Glu-tRNA(Gln) in the mitochondria. The reaction takes place in the presence of glutamine and ATP through an activated gamma-phospho-Glu-tRNA(Gln). This chain is Glutamyl-tRNA(Gln) amidotransferase subunit C, mitochondrial, found in Drosophila pseudoobscura pseudoobscura (Fruit fly).